The sequence spans 256 residues: tRNA pseudouridine synthase A (256 aa).

D52 functions as the Nucleophile in the catalytic mechanism. Residue Y111 coordinates substrate.

It belongs to the tRNA pseudouridine synthase TruA family. Homodimer.

It carries out the reaction uridine(38/39/40) in tRNA = pseudouridine(38/39/40) in tRNA. Functionally, formation of pseudouridine at positions 38, 39 and 40 in the anticodon stem and loop of transfer RNAs. This is tRNA pseudouridine synthase A from Paramagnetospirillum magneticum (strain ATCC 700264 / AMB-1) (Magnetospirillum magneticum).